A 1362-amino-acid chain; its full sequence is Leptomycin B resistance protein pmd1 (1362 aa).

Positions M1–S45 are disordered. Residues M1–D91 lie on the Cytoplasmic side of the membrane. A compositionally biased stretch (basic and acidic residues) spans F33 to S45. A run of 6 helical transmembrane segments spans residues I92–V115, T138–V162, L220–I237, L244–I264, A320–G346, and L354–A374. One can recognise an ABC transmembrane type-1 1 domain in the interval Q95–S385. At N375–T788 the chain is on the cytoplasmic side. The region spanning I420 to A665 is the ABC transporter 1 domain. G455–S462 lines the ATP pocket. The disordered stretch occupies residues L748–K768. Transmembrane regions (helical) follow at residues M789–Y809, V835–A859, L916–A935, L940–Y957, G1022–F1040, and I1054–G1072. An ABC transmembrane type-1 2 domain is found at L795–K1083. At Q1073 to A1362 the chain is on the cytoplasmic side. The 238-residue stretch at I1119–E1356 folds into the ABC transporter 2 domain. G1154–S1161 is a binding site for ATP.

This sequence belongs to the ABC transporter superfamily. ABCB family. Multidrug resistance exporter (TC 3.A.1.201) subfamily.

The protein localises to the membrane. Its function is as follows. May be a transmembrane transporter of the mating factor, namely P-factor or M-factor. Confers resistance to leptomycin B and to several other antifungal drugs. This is Leptomycin B resistance protein pmd1 (pmd1) from Schizosaccharomyces pombe (strain 972 / ATCC 24843) (Fission yeast).